Here is a 346-residue protein sequence, read N- to C-terminus: MCEGPSRISGPIPPDPTLCPDNYRRPTSAQGRLEGNALKLDLLTSDRALDTTAPRGPCIGPGAGEILERGQRGVGDVLLQLEGISLGPGASLKRKDPKDHEKENLRRIREIQKRFREQERSREQGQPRPLKALWRSPKYDKVESRVKAQLQEPGPASGTESAHFLRAHSRCGPGLPPPHVSSPQPTPPGPEAKEPGLGVDFIRHNARAAKRAPRRHSCSLQVLAQVLEQQRQAQEHYNATQKGHVPHYLLERRDLWRREAEARKQSQPDPAMPPGHTRMPENQRLETLTKLLQSQSQLLRELVLLPAGADSLRAQSHRAELDRKLVQVEEAIKIFSRPKVFVKMDD.

The interval 1–35 (MCEGPSRISGPIPPDPTLCPDNYRRPTSAQGRLEG) is disordered. S91 is subject to Phosphoserine. The interval 91–171 (SLKRKDPKDH…AHFLRAHSRC (81 aa)) is required for binding to microtubules. Basic and acidic residues predominate over residues 114–125 (RFREQERSREQG). 3 disordered regions span residues 114–137 (RFRE…WRSP), 167–197 (AHSR…EPGL), and 260–280 (AEAR…TRMP). S136 is modified (phosphoserine). A compositionally biased stretch (pro residues) spans 174–190 (GLPPPHVSSPQPTPPGP). The Enkurin domain maps to 251 to 343 (ERRDLWRREA…IFSRPKVFVK (93 aa)).

Interacts with alpha-tubulin. Interacts (via central region) with CCP110 (via N-terminal region); competes with CEP97 for binding to CCP110.

It is found in the cytoplasm. The protein resides in the cytoskeleton. It localises to the microtubule organizing center. Its subcellular location is the centrosome. The protein localises to the centriole. It is found in the cilium basal body. The protein resides in the cell projection. It localises to the cilium. Its subcellular location is the spindle. The protein localises to the spindle pole. It is found in the cilium axoneme. Microtubule-binding protein which regulates microtubule organization and stability. Promotes the stability of astral microtubules and facilitates the proper orientation of the mitotic spindle. This allows the oriented division of basal keratinocytes and contributes to epidermal stratification. Required for the assembly of both primary and motile cilia. Destabilizes the interaction between CCP110 and CEP97 by competing with CEP97 for binding to CCP110 which promotes the removal of CCP110 and CEP97 from the mother centriole and allows the initiation of ciliogenesis. The polypeptide is Enkurin domain-containing protein 1 (ENKD1) (Homo sapiens (Human)).